Reading from the N-terminus, the 385-residue chain is Deoxyguanosinetriphosphate triphosphohydrolase-like protein (385 aa).

An HD domain is found at 75–204; it reads RLTHSLEVAQ…INFADEIAYN (130 aa).

The protein belongs to the dGTPase family. Type 2 subfamily.

The protein is Deoxyguanosinetriphosphate triphosphohydrolase-like protein of Geobacter sulfurreducens (strain ATCC 51573 / DSM 12127 / PCA).